We begin with the raw amino-acid sequence, 586 residues long: Actin-related protein 9 (586 aa).

Positions 141–169 are disordered; the sequence is STPIVDKDADVDPLQRSTPDDTEPNSEEN.

It belongs to the actin family. ARP8 subfamily.

The polypeptide is Actin-related protein 9 (ARP9) (Oryza sativa subsp. indica (Rice)).